Consider the following 406-residue polypeptide: Type IV pilus assembly protein PilC (406 aa).

4 helical membrane-spanning segments follow: residues 69–91 (IFSRQLATMLGAGLTLLQALAIL), 171–191 (YPVIVFVFAVGVAYFLLTGIV), 211–231 (FLIAVSDLLRAATLPLLLLAV), and 377–397 (MIIFLGVIVGMIVAGMFLPLF).

The protein belongs to the GSP F family. Homotetramer. Interacts with PilB.

The protein resides in the cell inner membrane. Functionally, essential inner membrane component of the type IV pilus (T4P) that plays a role in surface and host cell adhesion, colonization, biofilm maturation, virulence, and twitching, a form of surface-associated motility facilitated by cycles of extension, adhesion, and retraction of T4P fibers. Controls both pilus assembly and disassembly and plays an important role in PilB localization to the complex and ATPase activity. The sequence is that of Type IV pilus assembly protein PilC from Thermus thermophilus (strain ATCC 27634 / DSM 579 / HB8).